The following is a 151-amino-acid chain: Methylglyoxal synthase (151 aa).

In terms of domain architecture, MGS-like spans 6 to 151 (RTMPAHKHVA…DYEAYLAERM (146 aa)). Substrate-binding positions include His-19, Lys-23, 45-48 (TGTT), and 65-66 (SG). The active-site Proton donor/acceptor is the Asp-71. Substrate is bound at residue His-98.

It belongs to the methylglyoxal synthase family.

It carries out the reaction dihydroxyacetone phosphate = methylglyoxal + phosphate. Catalyzes the formation of methylglyoxal from dihydroxyacetone phosphate. This chain is Methylglyoxal synthase, found in Vibrio parahaemolyticus serotype O3:K6 (strain RIMD 2210633).